The sequence spans 254 residues: Major prion protein (254 aa).

The N-terminal stretch at 1 to 22 (MANLGYWLLALFVATWTDVGLC) is a signal peptide. An interaction with GRB2, ERI3 and SYN1 region spans residues 23–231 (KKRPKPGGWN…SQAYYDGRRS (209 aa)). A disordered region spans residues 25-107 (RPKPGGWNTG…QWNKPSKPKT (83 aa)). A run of 5 repeats spans residues 51 to 59 (PQGGGTWGQ), 60 to 67 (PHGGGWGQ), 68 to 75 (PHGGGWGQ), 76 to 83 (PHGGGWGQ), and 84 to 91 (PHGGGWGQ). The 5 X 8 AA tandem repeats of P-H-G-G-G-W-G-Q stretch occupies residues 51–91 (PQGGGTWGQPHGGGWGQPHGGGWGQPHGGGWGQPHGGGWGQ). Residues 52–95 (QGGGTWGQPHGGGWGQPHGGGWGQPHGGGWGQPHGGGWGQGGGT) are compositionally biased toward gly residues. Positions 61, 62, 63, 69, 70, 71, 77, 78, 79, 85, 86, and 87 each coordinate Cu(2+). An intrachain disulfide couples Cys179 to Cys214. 2 N-linked (GlcNAc...) asparagine glycosylation sites follow: Asn181 and Asn197. Ser231 is lipidated: GPI-anchor amidated serine. Positions 232 to 254 (SAVLFSSPPMILLISFLIFLIVG) are cleaved as a propeptide — removed in mature form.

It belongs to the prion family. Monomer and homodimer. Has a tendency to aggregate into amyloid fibrils containing a cross-beta spine, formed by a steric zipper of superposed beta-strands. Soluble oligomers may represent an intermediate stage on the path to fibril formation. Copper binding may promote oligomerization. Interacts with GRB2, APP, ERI3/PRNPIP and SYN1. Mislocalized cytosolically exposed PrP interacts with MGRN1; this interaction alters MGRN1 subcellular location and causes lysosomal enlargement. Interacts with KIAA1191.

The protein localises to the cell membrane. Its subcellular location is the golgi apparatus. Functionally, its primary physiological function is unclear. Has cytoprotective activity against internal or environmental stresses. May play a role in neuronal development and synaptic plasticity. May be required for neuronal myelin sheath maintenance. May play a role in iron uptake and iron homeostasis. Soluble oligomers are toxic to cultured neuroblastoma cells and induce apoptosis (in vitro). Association with GPC1 (via its heparan sulfate chains) targets PRNP to lipid rafts. Also provides Cu(2+) or Zn(2+) for the ascorbate-mediated GPC1 deaminase degradation of its heparan sulfate side chains. This is Major prion protein (PRNP) from Sigmodon hispidus (Hispid cotton rat).